The following is a 536-amino-acid chain: G-protein coupled receptor Mth2 (536 aa).

Residues 1–210 (MAERDHYHTI…DDNSTVKIIN (210 aa)) are Extracellular-facing. 5 cysteine pairs are disulfide-bonded: Cys17/Cys71, Cys73/Cys78, Cys82/Cys177, Cys83/Cys96, and Cys138/Cys197. Asn24 and Asn33 each carry an N-linked (GlcNAc...) asparagine glycan. N-linked (GlcNAc...) asparagine glycans are attached at residues Asn103, Asn113, Asn118, Asn159, Asn184, and Asn203. The helical transmembrane segment at 211-231 (AYAMMFSIPFMMLTIAVYLLI) threads the bilayer. Residues 232-241 (PELRNQHGKS) are Cytoplasmic-facing. Residues 242 to 262 (LVCYLVGLTVGYTSLCYVQLY) traverse the membrane as a helical segment. Topologically, residues 263 to 273 (QVDATGDACKV) are extracellular. The helical transmembrane segment at 274-294 (FGYTAYFFFMGAYMWLSVISF) threads the bilayer. Over 295 to 314 (DLWHNFRGTRGINRFQEKKR) the chain is Cytoplasmic. The chain crosses the membrane as a helical span at residues 315–335 (FLFYSLYSWGIAVVFLAFTYI). Topologically, residues 336-365 (AQELTNLPAYLKPGIGDGVYCWLDMSNWAA) are extracellular. Residues 366 to 386 (MIYFYGPILVIVVANTIMFIM) form a helical membrane-spanning segment. At 387–417 (TAIKIHGVQREMARIIASENSTKNLRTEKDK) the chain is on the cytoplasmic side. A helical membrane pass occupies residues 418 to 438 (FGLFLRLFLIMGITWLTELIS). The Extracellular segment spans residues 439–449 (YFVGSDKGWSK). Residues 450-470 (LFYISDLANAMQGFLIFMLFV) form a helical membrane-spanning segment. Over 471 to 536 (MKKKVKHLIT…VDPQKTTIFR (66 aa)) the chain is Cytoplasmic. Residues 487-506 (RDGSNQRQSQYSTKTTSSSV) form a disordered region. The segment covering 492 to 505 (QRQSQYSTKTTSSS) has biased composition (low complexity).

The protein belongs to the G-protein coupled receptor 2 family. Mth subfamily. As to quaternary structure, homodimer.

The protein localises to the cell membrane. In terms of biological role, involved in biological aging and stress response. Essential for adult survival. This is G-protein coupled receptor Mth2 (mth2) from Drosophila yakuba (Fruit fly).